The chain runs to 535 residues: MTILSAERAPSRKILAVVTVGRYTCAAPILEICRILHTRGHTIEFACLDGHQRLATPHAFVSKIHVVGRNMSVEEDKSLYRLFDESDASTAQGRKGTFRALQFFHSWWPETYRNLKALVSNPEHRPDFILADLLADACIDIMNEFHIPLAVHYPQMPIQMAPQKYIPGMPGAQLKHLSSEHASLWERLMEEYHVLQLLFAMKDYIFFQRNMRREAGLGPRPPPRKPDYLVLVNSFFGLEVPKDLPPLMIPIGPVMADSFPLMEPSSGLVEFLESRKQVIYVAFGSHVELPGWRVRRLIDGLDQALAAGDIDGVIWAWKNPMPILEDSETSTTTDGISDSKTDYNAVLRNQDERIRIMHWAPQRAILAHPSTCLYLSHCGASSTMEAVYHGVPVVAMPIYGDQLANGKRLEAAGVGINMNRNNFTAEGLAQNIGRIVRDDDGLFARNVLRLQRIATANSRRKHVAADRIEEVMYDSELRFGDGSKQGVELRPTHLQTPDSRMSWVRASNLDLYIVCIAFVAVPVGVARWLSKVWFA.

2 N-linked (GlcNAc...) asparagine glycosylation sites follow: asparagine 70 and asparagine 422. A helical transmembrane segment spans residues 506–526 (ASNLDLYIVCIAFVAVPVGVA).

It belongs to the glycosyltransferase 28 family.

It is found in the membrane. It catalyses the reaction stromemycin aglycone + UDP-alpha-D-glucose = stromemycin + UDP + H(+). It carries out the reaction exophillate aglycone + UDP-alpha-D-glucose = exophillate + UDP + H(+). It functions in the pathway mycotoxin biosynthesis. UDP-glycosyltransferase; part of the gene cluster that mediates the biosynthesis of stromemycin, a depside C-glucoside with two unsaturated C9 side chains belonging to aromatic polyketide glycosides. Acts as the tailoring enzyme responsible for 3-C-glucosylation of bininalkenylresorcylic acid produced by the combined action of the HR-PKS stmA and the NR-PKS stmB to yield stromemycin. Possesses a relatively strict acceptor specificity towards bininalkenylresorcylic acid for C-glycosylation, but is able to use several donors including UDP-alpha-D-galactose, UDP-alpha-D-xylose, UDP-alpha-D-4-keto-6-deoxyglucose, UDP-alpha-D-quinovose, and UDP-beta-L-rhamnose. The sequence is that of UDP-glycosyltransferase stmC from Aspergillus ustus.